Consider the following 218-residue polypeptide: Ras-related protein Rab-4A (218 aa).

GTP is bound by residues G23, T24, G25, K26, S27, C28, S42, H44, and T45. S27 provides a ligand contact to Mg(2+). The Switch 1 motif lies at 44–49; it reads HTIGVE. Mg(2+) is bound by residues T45 and D68. Residues 70 to 79 carry the Switch 2 motif; sequence AGQERFRSVT. G71 is a GTP binding site. Q72 is subject to 5-glutamyl serotonin. N126, K127, D129, A157, and L158 together coordinate GTP. S190 is modified (phosphoserine). S204 is modified (phosphoserine; by CDK1). Residues C216 and C218 are each lipidated (S-geranylgeranyl cysteine). Residue C218 is modified to Cysteine methyl ester.

This sequence belongs to the small GTPase superfamily. Rab family. Interacts with RAB11FIP1, RABEP1, ZFYVE20 and RUFY1. Interacts with SGSM1, SGSM2 and SGSM3. Interacts (membrane-bound form) with NDRG1; the interaction involves NDRG1 in vesicular recycling of E-cadherin. Interacts (in GTP-bound form) with GRIPAP1. Interacts with RABEP1 and RBSN. Does not interact with HPS4. Mg(2+) is required as a cofactor. Serotonylation of Gln-72 by TGM2 during activation and aggregation of platelets leads to constitutive activation of GTPase activity. Post-translationally, phosphorylated by CDK1 kinase during mitosis.

Its subcellular location is the membrane. The protein resides in the cytoplasm. It localises to the early endosome membrane. It is found in the recycling endosome membrane. It carries out the reaction GTP + H2O = GDP + phosphate + H(+). With respect to regulation, regulated by guanine nucleotide exchange factors (GEFs) which promote the exchange of bound GDP for free GTP. Regulated by GTPase activating proteins (GAPs) which increase the GTP hydrolysis activity. Inhibited by GDP dissociation inhibitors (GDIs). The small GTPases Rab are key regulators of intracellular membrane trafficking, from the formation of transport vesicles to their fusion with membranes. Rabs cycle between an inactive GDP-bound form and an active GTP-bound form that is able to recruit to membranes different sets of downstream effectors directly responsible for vesicle formation, movement, tethering and fusion. RAB4A is involved in protein transport. Also plays a role in vesicular traffic. Mediates VEGFR2 endosomal trafficking to enhance VEGFR2 signaling. Acts as a regulator of platelet alpha-granule release during activation and aggregation of platelets. The protein is Ras-related protein Rab-4A (RAB4A) of Bos taurus (Bovine).